Reading from the N-terminus, the 146-residue chain is Large ribosomal subunit protein uL15 (146 aa).

Residues 1 to 13 are compositionally biased toward basic and acidic residues; it reads MKLHELHSAEGSR. Positions 1–55 are disordered; it reads MKLHELHSAEGSRRNRKRVGRGTSSGYGKTSGRGQKGQLARQGGHTRLGFEGGQM. Over residues 23–35 the composition is skewed to gly residues; it reads TSSGYGKTSGRGQ.

It belongs to the universal ribosomal protein uL15 family. As to quaternary structure, part of the 50S ribosomal subunit.

Its function is as follows. Binds to the 23S rRNA. The chain is Large ribosomal subunit protein uL15 from Lactobacillus helveticus (strain DPC 4571).